Consider the following 197-residue polypeptide: Prefoldin subunit 3 (197 aa).

Ala-2 bears the N-acetylalanine mark. Lys-59 is modified (N6-acetyllysine).

It belongs to the prefoldin subunit alpha family. Heterohexamer of two PFD-alpha type and four PFD-beta type subunits. Binds to the C-terminal part of VHL.

It localises to the cytoplasm. It is found in the nucleus. Its function is as follows. Binds specifically to cytosolic chaperonin (c-CPN) and transfers target proteins to it. Binds to nascent polypeptide chain and promotes folding in an environment in which there are many competing pathways for nonnative proteins. This is Prefoldin subunit 3 (VBP1) from Bos taurus (Bovine).